The sequence spans 703 residues: MTAKPQKSCQFKRDYPQLINLYPPCALTTAQSLDNLTRLRLSRLTTQSTQPIQGLCVMGQWGLGDGLELLSLLQHWQTQTQTQTQPQGNTRLLVKVFEPNPINDYELKLLWDQSQSLISKSHLQPIANAILKAKPARIIGCQRLIFDDGRITVDLHFGDLHSALSQLPHSPAHLIQQWLVLPHLAAQLNGKQVWQMARLSTDDAQLIGVNLAETVRQLAHQSGFSTLNVSQDTSNGDASDALQSQIITDEILLHERKLLRQQADTAQAFTPKPAALVAKDHPVAIVGGGLASANLMLSLAERGQSSTLFCKDNELGQGASGNRQGAIYPLLTPENDELSRFFQQAFLFSRRRIEALSHASMMETETAKNVTAISHDFCGVLQTGHDERSQQRLDKIIQSQDWPAEIAYAVDANEANEIAQIGIDKAGFFYPLGGWVCPFEYAKAAVDKASQLANVQCHFNTEITEIECDANAWYLHSQGQRFGPFRQLVLANGAQLTQFSACERLQISPFRGQVSHVPAQFKLSQLATVLCANGYLTPSHQGLHCLGASYVKAAEHFDFCPQEQRENLGKMQESYPNQAWVDDIDISGNSARVGVRMVTRDHFPMMGCAPDVAEILARYELHQLNQQQAEQSKHYWQTTPAPILDGLYILGGLGSRGLSSGPLAAECLAAQLTGEPLPLDWPTLNKLNPNRMWLRKLLKGKAL.

Residues 1 to 281 (MTAKPQKSCQ…KPAALVAKDH (281 aa)) are tRNA (mnm(5)s(2)U34)-methyltransferase. Positions 286-703 (VGGGLASANL…LRKLLKGKAL (418 aa)) are FAD-dependent cmnm(5)s(2)U34 oxidoreductase.

In the N-terminal section; belongs to the methyltransferase superfamily. tRNA (mnm(5)s(2)U34)-methyltransferase family. It in the C-terminal section; belongs to the DAO family. Requires FAD as cofactor.

The protein localises to the cytoplasm. It catalyses the reaction 5-aminomethyl-2-thiouridine(34) in tRNA + S-adenosyl-L-methionine = 5-methylaminomethyl-2-thiouridine(34) in tRNA + S-adenosyl-L-homocysteine + H(+). In terms of biological role, catalyzes the last two steps in the biosynthesis of 5-methylaminomethyl-2-thiouridine (mnm(5)s(2)U) at the wobble position (U34) in tRNA. Catalyzes the FAD-dependent demodification of cmnm(5)s(2)U34 to nm(5)s(2)U34, followed by the transfer of a methyl group from S-adenosyl-L-methionine to nm(5)s(2)U34, to form mnm(5)s(2)U34. The polypeptide is tRNA 5-methylaminomethyl-2-thiouridine biosynthesis bifunctional protein MnmC (Shewanella sp. (strain MR-7)).